We begin with the raw amino-acid sequence, 146 residues long: Hemoglobin subunit beta (146 aa).

N-acetylvaline is present on Val-1. In terms of domain architecture, Globin spans 2–146 (HLSSEEKGLI…VANALAHKYH (145 aa)). Position 12 is a phosphothreonine (Thr-12). An N6-acetyllysine modification is found at Lys-59. A heme b-binding site is contributed by His-63. Residue Lys-82 is modified to N6-acetyllysine. Residue His-92 participates in heme b binding. Cys-93 is modified (S-nitrosocysteine). Lys-144 is modified (N6-acetyllysine).

It belongs to the globin family. As to quaternary structure, heterotetramer of two alpha chains and two beta chains. Red blood cells.

Its function is as follows. Involved in oxygen transport from the lung to the various peripheral tissues. This Potorous tridactylus (Potoroo) protein is Hemoglobin subunit beta (HBB).